Here is a 155-residue protein sequence, read N- to C-terminus: 3-hydroxyacyl-[acyl-carrier-protein] dehydratase FabZ (155 aa).

His58 is an active-site residue.

Belongs to the thioester dehydratase family. FabZ subfamily.

It is found in the cytoplasm. It catalyses the reaction a (3R)-hydroxyacyl-[ACP] = a (2E)-enoyl-[ACP] + H2O. Its function is as follows. Involved in unsaturated fatty acids biosynthesis. Catalyzes the dehydration of short chain beta-hydroxyacyl-ACPs and long chain saturated and unsaturated beta-hydroxyacyl-ACPs. This chain is 3-hydroxyacyl-[acyl-carrier-protein] dehydratase FabZ, found in Rhizobium etli (strain ATCC 51251 / DSM 11541 / JCM 21823 / NBRC 15573 / CFN 42).